Here is a 279-residue protein sequence, read N- to C-terminus: 4-hydroxy-3-methylbut-2-enyl diphosphate reductase (279 aa).

Position 12 (Cys12) interacts with [4Fe-4S] cluster. His36 and His70 together coordinate (2E)-4-hydroxy-3-methylbut-2-enyl diphosphate. 2 residues coordinate dimethylallyl diphosphate: His36 and His70. 2 residues coordinate isopentenyl diphosphate: His36 and His70. A [4Fe-4S] cluster-binding site is contributed by Cys92. His120 provides a ligand contact to (2E)-4-hydroxy-3-methylbut-2-enyl diphosphate. A dimethylallyl diphosphate-binding site is contributed by His120. Residue His120 coordinates isopentenyl diphosphate. Glu122 functions as the Proton donor in the catalytic mechanism. Thr158 lines the (2E)-4-hydroxy-3-methylbut-2-enyl diphosphate pocket. Cys186 contacts [4Fe-4S] cluster. Ser214, Ser215, Asn216, and Ser258 together coordinate (2E)-4-hydroxy-3-methylbut-2-enyl diphosphate. Residues Ser214, Ser215, Asn216, and Ser258 each contribute to the dimethylallyl diphosphate site. 4 residues coordinate isopentenyl diphosphate: Ser214, Ser215, Asn216, and Ser258.

This sequence belongs to the IspH family. [4Fe-4S] cluster is required as a cofactor.

The catalysed reaction is isopentenyl diphosphate + 2 oxidized [2Fe-2S]-[ferredoxin] + H2O = (2E)-4-hydroxy-3-methylbut-2-enyl diphosphate + 2 reduced [2Fe-2S]-[ferredoxin] + 2 H(+). It carries out the reaction dimethylallyl diphosphate + 2 oxidized [2Fe-2S]-[ferredoxin] + H2O = (2E)-4-hydroxy-3-methylbut-2-enyl diphosphate + 2 reduced [2Fe-2S]-[ferredoxin] + 2 H(+). It functions in the pathway isoprenoid biosynthesis; dimethylallyl diphosphate biosynthesis; dimethylallyl diphosphate from (2E)-4-hydroxy-3-methylbutenyl diphosphate: step 1/1. Its pathway is isoprenoid biosynthesis; isopentenyl diphosphate biosynthesis via DXP pathway; isopentenyl diphosphate from 1-deoxy-D-xylulose 5-phosphate: step 6/6. In terms of biological role, catalyzes the conversion of 1-hydroxy-2-methyl-2-(E)-butenyl 4-diphosphate (HMBPP) into a mixture of isopentenyl diphosphate (IPP) and dimethylallyl diphosphate (DMAPP). Acts in the terminal step of the DOXP/MEP pathway for isoprenoid precursor biosynthesis. In Campylobacter fetus subsp. fetus (strain 82-40), this protein is 4-hydroxy-3-methylbut-2-enyl diphosphate reductase.